A 307-amino-acid polypeptide reads, in one-letter code: MLIDAYGRRISSLRISLTNRCNLKCIYCHNEGEEDSGSEITVEEVAQIARICARYGVDKIKFSGGEPLLRRDFDEILRALPPMRDVSVTTNGTLLAARAESLKESGLDRVNVSLDSMDRDRFTFITQCKGQFDKVLDGIDAALSVGLTPVKINMVYLKGINEDEVDRMIDYVRGKPLVLQIIELMNFHGAFKYHADVASLEQRIKEKADKAVCREMHRRTKYYLGGAEVEIVRPIDNSEFCMNCNRLRITSDYKLKPCLLKNDNLVSVRGLSDAEVEAVLIKTVGAREPFFKSETAKVCQPYKIYEP.

The Radical SAM core domain maps to 5–227 (AYGRRISSLR…RRTKYYLGGA (223 aa)). Residue Arg-14 coordinates GTP. [4Fe-4S] cluster is bound by residues Cys-21 and Cys-25. Tyr-27 provides a ligand contact to S-adenosyl-L-methionine. Cys-28 lines the [4Fe-4S] cluster pocket. Lys-61 lines the GTP pocket. Gly-65 is a binding site for S-adenosyl-L-methionine. Thr-89 serves as a coordination point for GTP. S-adenosyl-L-methionine is bound at residue Ser-113. Residue Lys-151 participates in GTP binding. [4Fe-4S] cluster is bound by residues Cys-241 and Cys-244. 246-248 (RLR) is a GTP binding site. Cys-258 lines the [4Fe-4S] cluster pocket.

Belongs to the radical SAM superfamily. MoaA family. [4Fe-4S] cluster is required as a cofactor.

The catalysed reaction is GTP + AH2 + S-adenosyl-L-methionine = (8S)-3',8-cyclo-7,8-dihydroguanosine 5'-triphosphate + 5'-deoxyadenosine + L-methionine + A + H(+). The protein operates within cofactor biosynthesis; molybdopterin biosynthesis. Functionally, catalyzes the cyclization of GTP to (8S)-3',8-cyclo-7,8-dihydroguanosine 5'-triphosphate. The sequence is that of Probable GTP 3',8-cyclase from Methanocella arvoryzae (strain DSM 22066 / NBRC 105507 / MRE50).